The sequence spans 668 residues: Break repair meiotic recombinase recruitment factor 1 (668 aa).

5 disordered regions span residues 1-142 (MTKR…AQSP), 155-333 (LQEA…GCSS), 349-465 (LEER…GGQN), 482-521 (VLEHREIADDPLQEPGAQQGIPDTTSELAGQRDHLPHSAD), and 642-668 (LGGKAPLPYPSKGPGNIPRGDPPWREL). Positions 114-125 (TRKEEMKDEDRG) are enriched in basic and acidic residues. Over residues 166–180 (QADSARPEQSSQSPV) the composition is skewed to polar residues. Over residues 208 to 251 (SQDHLSEQGADDSKPETDRVPGDGGQKEHLPSIDSEGEKPDRGA) the composition is skewed to basic and acidic residues. The span at 279–296 (TPASAPTSGPAPGLGPAS) shows a compositional bias: low complexity. Positions 305–316 (AQGSPDPQQTPS) are enriched in polar residues. A Phosphoserine modification is found at serine 370. Residues 391 to 400 (TGETTGESGE) are compositionally biased toward low complexity.

As to quaternary structure, interacts with HSF2BP (via N-terminus) and BRCA2; the interaction with HSF2BP is direct and allows the formation of a ternary complex. The complex BRME1:HSF2BP:BRCA2 interacts with SPATA22, MEIOB and RAD51.

It localises to the chromosome. Functionally, meiotic recombination factor component of recombination bridges involved in meiotic double-strand break repair. Modulates the localization of recombinases DMC1:RAD51 to meiotic double-strand break (DSB) sites through the interaction with and stabilization of the BRCA2:HSF2BP complex during meiotic recombination. Indispensable for the DSB repair, homologous synapsis, and crossover formation that are needed for progression past metaphase I, is essential for spermatogenesis and male fertility. In Homo sapiens (Human), this protein is Break repair meiotic recombinase recruitment factor 1.